Reading from the N-terminus, the 67-residue chain is MASGTVKWFNSEKGFGFIAQDGGGPDVFAHYSNINAQGYRELQEGQAVTFDITQGQKGPQAENITPA.

A CSD domain is found at 4–64; it reads GTVKWFNSEK…GQKGPQAENI (61 aa).

It localises to the cytoplasm. The chain is Cold shock protein ScoF (scoF) from Streptomyces coelicolor (strain ATCC BAA-471 / A3(2) / M145).